We begin with the raw amino-acid sequence, 136 residues long: Histone H3.2 (136 aa).

Positions 1–20 (MARTKQTARKSTGGKAPRKQ) are disordered. N6-methylated lysine is present on lysine 5. N6-acetyllysine; alternate is present on lysine 10. N6-methylated lysine; alternate is present on lysine 10. At serine 11 the chain carries Phosphoserine. Position 12 is a phosphothreonine (threonine 12). Lysine 15 is subject to N6-acetyllysine. Residues lysine 19 and lysine 24 each carry the N6-acetyllysine; alternate modification. Lysine 19 and lysine 24 each carry N6-methylated lysine; alternate. At lysine 37 the chain carries N6-methylated lysine.

Belongs to the histone H3 family. As to quaternary structure, the nucleosome is a histone octamer containing two molecules each of H2A, H2B, H3 and H4 assembled in one H3-H4 heterotetramer and two H2A-H2B heterodimers. The octamer wraps approximately 147 bp of DNA. Acetylation is generally linked to gene activation. Can be acetylated to form H3K9ac, H3K14ac, H3K18ac and H3K23ac. H3K9ac could compete with H3K9me and prevent gene silencing. H3K9ac is restricted to euchromatin. In terms of processing, methylated to form mainly H3K4me, H3K9me, H3K18me, H3K23me and H3K36me. H3K4me1/2/3, H3K9me3 and H3K36me1/2/3 are typical marks for euchromatin, whereas heterochromatic chromocenters are enriched in H3K9me1/2. H2BK143ub1 is probably prerequisite for H3K4me. Post-translationally, can be phosphorylated to form H3S10ph and H3T11ph.

It localises to the nucleus. Its subcellular location is the chromosome. Its function is as follows. Core component of nucleosome. Nucleosomes wrap and compact DNA into chromatin, limiting DNA accessibility to the cellular machineries which require DNA as a template. Histones thereby play a central role in transcription regulation, DNA repair, DNA replication and chromosomal stability. DNA accessibility is regulated via a complex set of post-translational modifications of histones, also called histone code, and nucleosome remodeling. The protein is Histone H3.2 of Cichorium intybus (Chicory).